The chain runs to 179 residues: Large ribosomal subunit protein uL6 (179 aa).

This sequence belongs to the universal ribosomal protein uL6 family. Part of the 50S ribosomal subunit.

Functionally, this protein binds to the 23S rRNA, and is important in its secondary structure. It is located near the subunit interface in the base of the L7/L12 stalk, and near the tRNA binding site of the peptidyltransferase center. The polypeptide is Large ribosomal subunit protein uL6 (Herpetosiphon aurantiacus (strain ATCC 23779 / DSM 785 / 114-95)).